The following is a 481-amino-acid chain: MFHVPLLIGGKPCSASDERTFERRSPLTGEVVSRVAAASLEDADAAVAAAQAAFPEWAALAPSERRARLLRAADLLEDRSSEFTAAASETGAAGNWYGFNVYLAAGMLREAAAMTTQIQGDVIPSNVPGSFAMAVRQPCGVVLGIAPWNAPVILGVRAVAMPLACGNTVVLKSSELSPFTHRLIGQVLHDAGLGDGVVNVISNAPQDAPAVVERLIANPAVRRVNFTGSTHVGRIIGELSARHLKPAVLELGGKAPFLVLDDADLDAAVEAAAFGAYFNQGQICMSTERLIVTAVADAFVEKLARKVATLRAGDPNDPQSVLGSLIDANAGQRIQVLVDDALAKGARQVVGGGLDGSIMQPMLLDQVTEEMRLYREESFGPVAVVLRGDGDEELLRLANDSEFGLSAAIFSRDVSRAMELAQRVDSGICHINGPTVHDEAQMPFGGVKSSGYGSFGSRASIEHFTQLRWLTIQNGPRHYPI.

Residue 228–233 (GSTHVG) coordinates NAD(+). Residues Glu-250 and Cys-284 contribute to the active site.

This sequence belongs to the aldehyde dehydrogenase family.

The enzyme catalyses vanillin + NAD(+) + H2O = vanillate + NADH + 2 H(+). Its function is as follows. Catalyzes the NAD-dependent oxidation of vanillin to vanillic acid. This Pseudomonas sp. (strain HR199 / DSM 7063) protein is Vanillin dehydrogenase (vdh).